The sequence spans 92 residues: Sec-independent protein translocase protein TatA (92 aa).

Residues I2–F22 traverse the membrane as a helical segment. The disordered stretch occupies residues K43–G92. The span at E53–Q80 shows a compositional bias: basic and acidic residues.

This sequence belongs to the TatA/E family. As to quaternary structure, the Tat system comprises two distinct complexes: a TatABC complex, containing multiple copies of TatA, TatB and TatC subunits, and a separate TatA complex, containing only TatA subunits. Substrates initially bind to the TatABC complex, which probably triggers association of the separate TatA complex to form the active translocon.

It is found in the cell membrane. Functionally, part of the twin-arginine translocation (Tat) system that transports large folded proteins containing a characteristic twin-arginine motif in their signal peptide across membranes. TatA could form the protein-conducting channel of the Tat system. This Rubrobacter xylanophilus (strain DSM 9941 / JCM 11954 / NBRC 16129 / PRD-1) protein is Sec-independent protein translocase protein TatA.